Consider the following 88-residue polypeptide: UPF0297 protein Cphy_2298 (88 aa).

Belongs to the UPF0297 family.

The chain is UPF0297 protein Cphy_2298 from Lachnoclostridium phytofermentans (strain ATCC 700394 / DSM 18823 / ISDg) (Clostridium phytofermentans).